The primary structure comprises 504 residues: Cytochrome P450 monooxygenase braC (504 aa).

Residues 4-24 form a helical membrane-spanning segment; that stretch reads LYLPTIWASTLTAATIFIVAV. Residue Cys-448 participates in heme binding.

Belongs to the cytochrome P450 family. Requires heme as cofactor.

The protein resides in the membrane. Its pathway is secondary metabolite biosynthesis. Cytochrome P450 monooxygenase; part of the gene cluster that mediates the biosynthesis of the brasilane terpene glycosides brasilane D and E. The biosynthesis starts with the activity of the terpene cyclase braA that converts farnesyl pyrophosphate into the sesquiterpene alcohol trichobrasilenol. Subsequently, trichobrasilenol is glycosylated by the O-glycosyltransferase braB putatively using UDP-GlcNAc as sugar donor to yield brasilane A. The latter then undergoes two rounds of oxidation performed by the cytochrome P450 monooxygenase braC. In the first round braC hydroxylates C-12 forming brasilane D, which serves as substrate in the second round to establish the epoxide at the bond between C-5 and C-10 and oxidize the alcohol at C-12 to an aldehyde leading to the final product brasilane E. The chain is Cytochrome P450 monooxygenase braC from Annulohypoxylon truncatum (Hypoxylon truncatum).